Reading from the N-terminus, the 146-residue chain is 3-hydroxyacyl-[acyl-carrier-protein] dehydratase FabZ (146 aa).

H49 is a catalytic residue.

It belongs to the thioester dehydratase family. FabZ subfamily.

Its subcellular location is the cytoplasm. It catalyses the reaction a (3R)-hydroxyacyl-[ACP] = a (2E)-enoyl-[ACP] + H2O. Involved in unsaturated fatty acids biosynthesis. Catalyzes the dehydration of short chain beta-hydroxyacyl-ACPs and long chain saturated and unsaturated beta-hydroxyacyl-ACPs. This Pseudomonas entomophila (strain L48) protein is 3-hydroxyacyl-[acyl-carrier-protein] dehydratase FabZ.